The primary structure comprises 139 residues: Large ribosomal subunit protein bL21 (139 aa).

This sequence belongs to the bacterial ribosomal protein bL21 family. Part of the 50S ribosomal subunit. Contacts protein L20.

This protein binds to 23S rRNA in the presence of protein L20. The chain is Large ribosomal subunit protein bL21 from Prochlorococcus marinus (strain NATL2A).